The primary structure comprises 287 residues: Protease HtpX (287 aa).

Helical transmembrane passes span 4-24 and 33-53; these read IFLL…VMSI and SGLL…SLAI. His-139 is a binding site for Zn(2+). Residue Glu-140 is part of the active site. His-143 lines the Zn(2+) pocket. 2 helical membrane passes run 154–174 and 195–215; these read LIQG…AGII and AVVF…VAYF. Glu-220 lines the Zn(2+) pocket.

The protein belongs to the peptidase M48B family. Zn(2+) serves as cofactor.

It localises to the cell inner membrane. The sequence is that of Protease HtpX from Shewanella piezotolerans (strain WP3 / JCM 13877).